Reading from the N-terminus, the 58-residue chain is Pepsin-1 (58 aa).

The propeptide at 1-41 (LLQVPLEKGQSAREYLQEQGLWEQYRLKYPYNPMAKFDPSF) is activation peptide.

This sequence belongs to the peptidase A1 family.

This chain is Pepsin-1, found in Thunnus orientalis (North Pacific bluefin tuna).